Reading from the N-terminus, the 217-residue chain is Probable GTP-binding protein EngB (217 aa).

Positions 24–207 (SQPEICFAGR…HELIESWLIP (184 aa)) constitute an EngB-type G domain. Residues 32-39 (GRSNAGKS), 59-63 (GRTQH), 81-84 (DLPG), 148-151 (TKCD), and 185-188 (LFSA) each bind GTP. Mg(2+) contacts are provided by S39 and T61.

The protein belongs to the TRAFAC class TrmE-Era-EngA-EngB-Septin-like GTPase superfamily. EngB GTPase family. Mg(2+) is required as a cofactor.

Its function is as follows. Necessary for normal cell division and for the maintenance of normal septation. The chain is Probable GTP-binding protein EngB from Paraburkholderia phytofirmans (strain DSM 17436 / LMG 22146 / PsJN) (Burkholderia phytofirmans).